Here is a 107-residue protein sequence, read N- to C-terminus: Cytochrome c-550 (107 aa).

Heme c is bound by residues cysteine 11, cysteine 14, histidine 15, and methionine 80.

In terms of processing, binds 1 heme c group covalently per subunit.

The sequence is that of Cytochrome c-550 from Ancylobacter novellus (Thiobacillus novellus).